The chain runs to 467 residues: ATP synthase subunit beta (467 aa).

Position 150-157 (150-157 (GGAGVGKT)) interacts with ATP.

The protein belongs to the ATPase alpha/beta chains family. In terms of assembly, F-type ATPases have 2 components, CF(1) - the catalytic core - and CF(0) - the membrane proton channel. CF(1) has five subunits: alpha(3), beta(3), gamma(1), delta(1), epsilon(1). CF(0) has three main subunits: a(1), b(2) and c(9-12). The alpha and beta chains form an alternating ring which encloses part of the gamma chain. CF(1) is attached to CF(0) by a central stalk formed by the gamma and epsilon chains, while a peripheral stalk is formed by the delta and b chains.

It is found in the cell inner membrane. The enzyme catalyses ATP + H2O + 4 H(+)(in) = ADP + phosphate + 5 H(+)(out). Functionally, produces ATP from ADP in the presence of a proton gradient across the membrane. The catalytic sites are hosted primarily by the beta subunits. The sequence is that of ATP synthase subunit beta from Aliivibrio salmonicida (strain LFI1238) (Vibrio salmonicida (strain LFI1238)).